The chain runs to 94 residues: Small ribosomal subunit protein uS19 (94 aa).

It belongs to the universal ribosomal protein uS19 family.

Functionally, protein S19 forms a complex with S13 that binds strongly to the 16S ribosomal RNA. This Endomicrobium trichonymphae protein is Small ribosomal subunit protein uS19.